We begin with the raw amino-acid sequence, 332 residues long: C4-dicarboxylate-binding periplasmic protein DctP (332 aa).

A signal peptide spans 1–22; it reads MFKPLTLIAASILAVTSFNAAA.

It belongs to the bacterial solute-binding protein 7 family. In terms of assembly, the complex comprises the extracytoplasmic solute receptor protein DctP, and the two transmembrane proteins DctQ and DctM.

It localises to the periplasm. In terms of biological role, part of the tripartite ATP-independent periplasmic (TRAP) transport system DctPQM involved in C4-dicarboxylates uptake. The protein is C4-dicarboxylate-binding periplasmic protein DctP of Vibrio cholerae serotype O1 (strain ATCC 39315 / El Tor Inaba N16961).